The chain runs to 255 residues: Thiazole synthase (255 aa).

Lys96 serves as the catalytic Schiff-base intermediate with DXP. 1-deoxy-D-xylulose 5-phosphate is bound by residues Gly157, 183–184 (AG), and 205–206 (NS).

Belongs to the ThiG family. As to quaternary structure, homotetramer. Forms heterodimers with either ThiH or ThiS.

Its subcellular location is the cytoplasm. The enzyme catalyses [ThiS sulfur-carrier protein]-C-terminal-Gly-aminoethanethioate + 2-iminoacetate + 1-deoxy-D-xylulose 5-phosphate = [ThiS sulfur-carrier protein]-C-terminal Gly-Gly + 2-[(2R,5Z)-2-carboxy-4-methylthiazol-5(2H)-ylidene]ethyl phosphate + 2 H2O + H(+). Its pathway is cofactor biosynthesis; thiamine diphosphate biosynthesis. Functionally, catalyzes the rearrangement of 1-deoxy-D-xylulose 5-phosphate (DXP) to produce the thiazole phosphate moiety of thiamine. Sulfur is provided by the thiocarboxylate moiety of the carrier protein ThiS. In vitro, sulfur can be provided by H(2)S. This chain is Thiazole synthase, found in Staphylococcus carnosus (strain TM300).